A 47-amino-acid chain; its full sequence is PhoP/PhoQ regulator MgrB (47 aa).

Residues 6–26 traverse the membrane as a helical segment; the sequence is WVILIIVALVCLLLWAQVFNI.

Belongs to the MgrB family. In terms of assembly, may form homooligomers. Probably interacts with the periplasmic domain of PhoQ.

It is found in the cell inner membrane. Functionally, phoP-regulated transcription is redox-sensitive, being activated when the periplasm becomes more reducing. MgrB acts between DsbA/DsbB and PhoP/PhoQ in this pathway. Represses PhoP/PhoQ signaling, possibly by binding to the periplasmic domain of PhoQ, altering its activity and that of downstream effector PhoP. The sequence is that of PhoP/PhoQ regulator MgrB from Citrobacter koseri (strain ATCC BAA-895 / CDC 4225-83 / SGSC4696).